We begin with the raw amino-acid sequence, 272 residues long: uncharacterized protein (272 aa).

Catalysis depends on residues D71 and E163.

This sequence belongs to the glycosyl hydrolase 25 family.

This is an uncharacterized protein from Escherichia coli O6:H1 (strain CFT073 / ATCC 700928 / UPEC).